We begin with the raw amino-acid sequence, 438 residues long: Serine hydroxymethyltransferase (438 aa).

(6S)-5,6,7,8-tetrahydrofolate contacts are provided by residues L133 and 137 to 139 (GHL). Position 242 is an N6-(pyridoxal phosphate)lysine (K242).

Belongs to the SHMT family. Homodimer. Requires pyridoxal 5'-phosphate as cofactor.

It is found in the cytoplasm. The catalysed reaction is (6R)-5,10-methylene-5,6,7,8-tetrahydrofolate + glycine + H2O = (6S)-5,6,7,8-tetrahydrofolate + L-serine. The protein operates within one-carbon metabolism; tetrahydrofolate interconversion. Its pathway is amino-acid biosynthesis; glycine biosynthesis; glycine from L-serine: step 1/1. Catalyzes the reversible interconversion of serine and glycine with tetrahydrofolate (THF) serving as the one-carbon carrier. This reaction serves as the major source of one-carbon groups required for the biosynthesis of purines, thymidylate, methionine, and other important biomolecules. Also exhibits THF-independent aldolase activity toward beta-hydroxyamino acids, producing glycine and aldehydes, via a retro-aldol mechanism. The protein is Serine hydroxymethyltransferase of Brucella canis (strain ATCC 23365 / NCTC 10854 / RM-666).